Reading from the N-terminus, the 271-residue chain is Putative cysteine protease YopT-like blr2140 (271 aa).

The interval 1 to 81 (MYDRIGGSST…STSSPESPAT (81 aa)) is disordered. Polar residues predominate over residues 7–29 (GSSTRTSQTDEPSQSVDSGSFTE). Low complexity predominate over residues 65 to 81 (TSSASEPSTSSPESPAT). Cys-100 is an active-site residue. Positions 114–136 (SPSTRMSALTPGSQTHASAAERQ) are disordered. Active-site residues include His-213 and Asp-228.

It belongs to the peptidase C58 family.

In terms of biological role, potential cysteine protease, which may play a central role after invasion of host cell. This Bradyrhizobium diazoefficiens (strain JCM 10833 / BCRC 13528 / IAM 13628 / NBRC 14792 / USDA 110) protein is Putative cysteine protease YopT-like blr2140.